The following is a 117-amino-acid chain: B-box domain protein 30 (117 aa).

The B box-type; atypical zinc finger occupies 27–73; the sequence is KAPVSCELCGENATVYCEADAAFLCRKCDRWVHSANFLARRHLRRVI. C32, C35, C54, and H59 together coordinate Zn(2+). The PFVFL signature appears at 113–117; the sequence is PFVFL.

As to quaternary structure, interacts with CO (via B-box) and with TPL (via PFVFL motif). As to expression, highly expressed in shoot apical meristems and in vascular tissues of leaves. Also detected in petioles.

The protein resides in the nucleus. Its function is as follows. Developmental regulator acting by forming heterodimeric complexes, that sequester CO and CO-like (COL) proteins into non-functional complexes. Engages CO and the transcriptional repressor TPL in a tripartite complex. Involved in the CO-mediated long-day flowering-promotion pathway. This is B-box domain protein 30 from Arabidopsis thaliana (Mouse-ear cress).